The sequence spans 525 residues: Putative ribose/galactose/methyl galactoside import ATP-binding protein (525 aa).

The segment at 1 to 30 is disordered; that stretch reads MFGSATANPPAQRDLPSSDSDSPTPDAQPP. Positions 14–25 are enriched in low complexity; that stretch reads DLPSSDSDSPTP. ABC transporter domains follow at residues 33–269 and 279–523; these read LEIS…VGRE and KPPG…SGHK. 65–72 is an ATP binding site; it reads GENGAGKS.

The protein belongs to the ABC transporter superfamily. Carbohydrate importer 2 (CUT2) (TC 3.A.1.2) family.

The protein resides in the cell inner membrane. The enzyme catalyses D-ribose(out) + ATP + H2O = D-ribose(in) + ADP + phosphate + H(+). It catalyses the reaction D-galactose(out) + ATP + H2O = D-galactose(in) + ADP + phosphate + H(+). Functionally, part of an ABC transporter complex involved in carbohydrate import. Could be involved in ribose, galactose and/or methyl galactoside import. Responsible for energy coupling to the transport system. This is Putative ribose/galactose/methyl galactoside import ATP-binding protein from Pseudomonas savastanoi pv. phaseolicola (strain 1448A / Race 6) (Pseudomonas syringae pv. phaseolicola (strain 1448A / Race 6)).